The following is a 456-amino-acid chain: MTHLIETFTSVLHQSALKPSRLIVAFSGGVDSRVLLELAAQYAQTHGIECCAVHVHHGLSKNADLWAEQCQTWCDALSVSLAVERVSLDINCGESVEKLARDARYQAFQQHIRQGDVLVTGQHIDDQLETFLLALKRGSGPKGLSSMAKVMSFGEAFIVRPLLSVTRLDIEASAHDMGLTWVEDESNQDLRFDRNFIRHQVTPTLTERWPSFRESVCRSAQLCAEQESLLDELLESHLQQALGGCNSKSNSKSNSKSQSLSIDSLSQHSDLLRARLIRMWLSHCNQPMPSQKQLKLIWDEVACAQADANPKLVLNDVEIRRFNNQLYLVQDTKDLSSWKSEILIDENLLLPDGLGEIHLKAVSSGSASHNRDVQRFSLTKANGTLRVIFNPEGVSAHPVGRGHSRKLKKLFQEYQVPSWLRRRTPILMDGDRVIAVLGLFVDKNYEGQDCEALWSK.

27–32 (SGGVDS) provides a ligand contact to ATP.

The protein belongs to the tRNA(Ile)-lysidine synthase family.

It localises to the cytoplasm. It carries out the reaction cytidine(34) in tRNA(Ile2) + L-lysine + ATP = lysidine(34) in tRNA(Ile2) + AMP + diphosphate + H(+). In terms of biological role, ligates lysine onto the cytidine present at position 34 of the AUA codon-specific tRNA(Ile) that contains the anticodon CAU, in an ATP-dependent manner. Cytidine is converted to lysidine, thus changing the amino acid specificity of the tRNA from methionine to isoleucine. In Vibrio atlanticus (strain LGP32) (Vibrio splendidus (strain Mel32)), this protein is tRNA(Ile)-lysidine synthase.